The following is a 356-amino-acid chain: Tyrosine recombinase XerS (356 aa).

A Core-binding (CB) domain is found at 16-121 (LMPWYVLEYY…ALSSLYKYLT (106 aa)). One can recognise a Tyr recombinase domain in the interval 169 to 354 (GFLTYIDQEH…VNDEQKNALD (186 aa)). Active-site residues include Arg210, Lys234, His306, Arg309, and His332. Tyr341 acts as the O-(3'-phospho-DNA)-tyrosine intermediate in catalysis.

Belongs to the 'phage' integrase family. XerS subfamily.

Its subcellular location is the cytoplasm. FtsK is required for recombination. In terms of biological role, site-specific tyrosine recombinase, which acts by catalyzing the cutting and rejoining of the recombining DNA molecules. Essential to convert dimers of the bacterial chromosome into monomers to permit their segregation at cell division. This is Tyrosine recombinase XerS from Streptococcus pneumoniae serotype 2 (strain D39 / NCTC 7466).